A 416-amino-acid polypeptide reads, in one-letter code: Serine--tRNA ligase (416 aa).

232-234 is an L-serine binding site; the sequence is TAE. Residue 263–265 coordinates ATP; it reads RKE. L-serine is bound at residue Glu-286. 350 to 353 provides a ligand contact to ATP; the sequence is EISS. Ser-384 is a binding site for L-serine.

This sequence belongs to the class-II aminoacyl-tRNA synthetase family. Type-1 seryl-tRNA synthetase subfamily. As to quaternary structure, homodimer. The tRNA molecule binds across the dimer.

The protein localises to the cytoplasm. The enzyme catalyses tRNA(Ser) + L-serine + ATP = L-seryl-tRNA(Ser) + AMP + diphosphate + H(+). The catalysed reaction is tRNA(Sec) + L-serine + ATP = L-seryl-tRNA(Sec) + AMP + diphosphate + H(+). It participates in aminoacyl-tRNA biosynthesis; selenocysteinyl-tRNA(Sec) biosynthesis; L-seryl-tRNA(Sec) from L-serine and tRNA(Sec): step 1/1. In terms of biological role, catalyzes the attachment of serine to tRNA(Ser). Is also able to aminoacylate tRNA(Sec) with serine, to form the misacylated tRNA L-seryl-tRNA(Sec), which will be further converted into selenocysteinyl-tRNA(Sec). This chain is Serine--tRNA ligase, found in Nautilia profundicola (strain ATCC BAA-1463 / DSM 18972 / AmH).